The sequence spans 1052 residues: SE-cephalotoxin (1052 aa).

Residues 1–21 form the signal peptide; that stretch reads MMGTSRCVILLFALLLWAANA. Residues 22-29 constitute a propeptide that is removed on maturation; sequence APPEIHTT. N41 carries N-linked (GlcNAc...) asparagine glycosylation. Positions 130-194 form a coiled coil; the sequence is TGVNRKLDQI…DMNKRRLMAE (65 aa). N353 carries N-linked (GlcNAc...) asparagine glycosylation. The EGF-like domain maps to 460–497; sequence PGNPCNHGCNGHGECKVVPYTDQFQCFCHGNYEGKMCQ. 3 cysteine pairs are disulfide-bonded: C464/C474, C468/C485, and C487/C496. Residues N576 and N715 are each glycosylated (N-linked (GlcNAc...) asparagine). The Sushi domain occupies 709 to 769; that stretch reads TSCPPLNVTH…QWSATPKCES (61 aa). Disulfide bonds link C711-C752, C739-C767, C780-C814, C784-C820, C795-C804, C829-C847, and C841-C858. The TSP type-1 domain occupies 768–821; it reads ESSWSRWSKWSACASTCGNATQSRRRRCLGQSESEKCIGPSKQVRKCFVEDCCQ. N786 is a glycosylation site (N-linked (GlcNAc...) asparagine). Positions 819-859 constitute an LDL-receptor class A domain; the sequence is CCQEKYGKFKCDNNKCISLSRVCDGNDDCRNAEDESKSRCK.

In terms of assembly, monomer. Expressed by the salivary gland.

Its subcellular location is the secreted. In Acanthosepion esculentum (Golden cuttlefish), this protein is SE-cephalotoxin.